The sequence spans 1697 residues: SAC3 family protein B (1697 aa).

4 disordered regions span residues 54 to 134, 167 to 280, 306 to 413, and 491 to 512; these read PPAS…QPGG, QRPN…SRSN, EATR…EQAR, and ESER…VDGD. Over residues 120–134 the composition is skewed to low complexity; that stretch reads QNPSPSSGQPYQPGG. Over residues 178–192 the composition is skewed to basic and acidic residues; that stretch reads DGSRNFLKDHGEHSR. The span at 193–202 shows a compositional bias: polar residues; it reads ATSPPATSHI. The segment covering 215–227 has biased composition (basic and acidic residues); the sequence is RSQDSKRKSRSDI. Composition is skewed to polar residues over residues 233 to 243, 257 to 280, and 335 to 380; these read MGFSRRNQSPV, PLSS…SRSN, and RFST…SPAT. In terms of domain architecture, PCI spans 625-813; that stretch reads NIEQMNKTSV…KCSKLVHMKK (189 aa).

It belongs to the SAC3 family. Interacts with SAC3A, EER5 and CML19. Interacts with UCH1 and UCH2.

It is found in the nucleus. Functionally, component of the TREX-2 complex (transcription and export complex 2), a muliprotein complex that functions in docking export-competent ribonucleoprotein particles (mRNPs) to the nuclear entrance of the nuclear pore complex (nuclear basket). TREX-2 participates in mRNA export and accurate chromatin positioning in the nucleus by tethering genes to the nuclear periphery. The sequence is that of SAC3 family protein B from Arabidopsis thaliana (Mouse-ear cress).